The sequence spans 299 residues: NAD kinase (299 aa).

Residue D71 is the Proton acceptor of the active site. NAD(+)-binding positions include 71–72 (DG), 145–146 (ND), R173, D175, 186–191 (TAYSLS), A210, and Q248.

Belongs to the NAD kinase family. A divalent metal cation is required as a cofactor.

The protein localises to the cytoplasm. It carries out the reaction NAD(+) + ATP = ADP + NADP(+) + H(+). Its function is as follows. Involved in the regulation of the intracellular balance of NAD and NADP, and is a key enzyme in the biosynthesis of NADP. Catalyzes specifically the phosphorylation on 2'-hydroxyl of the adenosine moiety of NAD to yield NADP. The chain is NAD kinase from Bordetella pertussis (strain Tohama I / ATCC BAA-589 / NCTC 13251).